The sequence spans 615 residues: Protein PSK SIMULATOR 2 (615 aa).

A lipid anchor (N-myristoyl glycine) is attached at G2. A compositionally biased stretch (basic and acidic residues) spans 16 to 27; it reads KKLRSNDDDKSR. 2 disordered regions span residues 16–59 and 506–529; these read KKLR…KSSK and AHGV…SNTQ. Positions 42-52 are enriched in low complexity; it reads SDSYYSDNYGG. The segment covering 512-529 has biased composition (polar residues); it reads QETNHVSPPNNRTISNTQ.

It localises to the nucleus. Promotes seedling growth probably via the regulation of phytosulfokine (PSK) signaling; PSK are peptide phytohormones acting as growth factors. Involved in PSK-induced root growth. Together with PSI1 and PSI3, required during vegetative growth and reproduction. In Arabidopsis thaliana (Mouse-ear cress), this protein is Protein PSK SIMULATOR 2.